A 176-amino-acid polypeptide reads, in one-letter code: Large ribosomal subunit protein uL30 (176 aa).

This sequence belongs to the universal ribosomal protein uL30 family. As to quaternary structure, part of the 50S ribosomal subunit.

The polypeptide is Large ribosomal subunit protein uL30 (Pyrobaculum arsenaticum (strain DSM 13514 / JCM 11321 / PZ6)).